The following is a 349-amino-acid chain: GDSL esterase/lipase At1g58525 (349 aa).

The first 19 residues, 1–19 (MKLQILLLALVLIAVEANA), serve as a signal peptide directing secretion. The N-linked (GlcNAc...) asparagine glycan is linked to Asn-25. Ser-37 (nucleophile) is an active-site residue. Asn-316 carries N-linked (GlcNAc...) asparagine glycosylation. Residues Asp-324 and His-327 contribute to the active site.

It belongs to the 'GDSL' lipolytic enzyme family.

The protein localises to the secreted. The protein is GDSL esterase/lipase At1g58525 of Arabidopsis thaliana (Mouse-ear cress).